A 367-amino-acid polypeptide reads, in one-letter code: Glycolate oxidase 3 (367 aa).

An FMN hydroxy acid dehydrogenase domain is found at 1–360 (MELITNVSEY…TRNHVITDSD (360 aa)). Glyoxylate is bound at residue Tyr25. FMN is bound by residues 78–80 (PSA), Ser107, 128–130 (QLY), and Thr156. Tyr130 provides a ligand contact to glyoxylate. Residue Arg165 participates in glyoxylate binding. Positions 231 and 253 each coordinate FMN. Glyoxylate-binding residues include His255 and Arg258. The Proton acceptor role is filled by His255. FMN is bound by residues 286 to 290 (DGGVR) and 309 to 310 (GR). Positions 365–367 (SRL) match the Microbody targeting signal motif.

The protein belongs to the FMN-dependent alpha-hydroxy acid dehydrogenase family. As to quaternary structure, homotetramer. FMN is required as a cofactor.

It localises to the peroxisome. It carries out the reaction glycolate + O2 = glyoxylate + H2O2. Its pathway is photosynthesis; photorespiration; glycine from 2-phosphoglycolate: step 2/3. Its function is as follows. Catalyzes the oxidation of glycolate to glyoxylate, with a reduction of O2 to H2O2. Is a key enzyme in photorespiration in green plants. The chain is Glycolate oxidase 3 (GLO3) from Oryza sativa subsp. indica (Rice).